Consider the following 162-residue polypeptide: 3-isopropylmalate dehydratase small subunit (162 aa).

It belongs to the LeuD family. LeuD type 2 subfamily. Heterodimer of LeuC and LeuD.

The catalysed reaction is (2R,3S)-3-isopropylmalate = (2S)-2-isopropylmalate. It participates in amino-acid biosynthesis; L-leucine biosynthesis; L-leucine from 3-methyl-2-oxobutanoate: step 2/4. Functionally, catalyzes the isomerization between 2-isopropylmalate and 3-isopropylmalate, via the formation of 2-isopropylmaleate. This chain is 3-isopropylmalate dehydratase small subunit (leuD), found in Methanosarcina mazei (strain ATCC BAA-159 / DSM 3647 / Goe1 / Go1 / JCM 11833 / OCM 88) (Methanosarcina frisia).